The following is a 949-amino-acid chain: Leucine--tRNA ligase (949 aa).

A 'HIGH' region motif is present at residues 68-79 (PYPSGEGLHVGH). Residues 540-562 (VPDYSPVSFDPDDAGSEPSPPLG) form a disordered region. The 'KMSKS' region signature appears at 722–726 (KIGKS). Position 725 (Lys725) interacts with ATP.

It belongs to the class-I aminoacyl-tRNA synthetase family.

The protein localises to the cytoplasm. The enzyme catalyses tRNA(Leu) + L-leucine + ATP = L-leucyl-tRNA(Leu) + AMP + diphosphate. This is Leucine--tRNA ligase from Mycolicibacterium gilvum (strain PYR-GCK) (Mycobacterium gilvum (strain PYR-GCK)).